The chain runs to 434 residues: Septin-6 (434 aa).

Ala-2 bears the N-acetylalanine mark. A Phosphoserine modification is found at Ser-27. Positions 39-305 (QGFCFNILCV…ELYRRCKLEE (267 aa)) constitute a Septin-type G domain. Residues 49–56 (GETGLGKS) are G1 motif. GTP contacts are provided by residues 49 to 56 (GETGLGKS), Gly-104, 185 to 193 (KADAISKSE), Gly-239, and Arg-254. A G3 motif region spans residues 101–104 (STVG). A G4 motif region spans residues 184 to 187 (AKAD). Residues 321 to 409 (QETYEAKRNE…KTAAELLQSQ (89 aa)) are a coiled coil. At Lys-367 the chain carries N6-acetyllysine. A disordered region spans residues 405–434 (LLQSQGSQAGGSQTLKRDKEKKNNPWLCTE). The segment covering 407–417 (QSQGSQAGGSQ) has biased composition (low complexity). Ser-416 is subject to Phosphoserine. Thr-418 carries the post-translational modification Phosphothreonine.

Belongs to the TRAFAC class TrmE-Era-EngA-EngB-Septin-like GTPase superfamily. Septin GTPase family. In terms of assembly, septins polymerize into heterooligomeric protein complexes that form filaments, and associate with cellular membranes, actin filaments and microtubules. GTPase activity is required for filament formation. Filaments are assembled from asymmetrical heterotrimers, composed of SEPTIN2, SEPTIN6 and SEPTIN7 that associate head-to-head to form a hexameric unit. Within the trimer, directly interacts with SEPTIN2 and SEPTIN7. Also interacts with SEPTIN9 and SEPTIN12. Interaction with SEPTIN12 alters filament structure. Component of a septin core octameric complex consisting of SEPTIN12, SEPTIN7, SEPTIN6 and SEPTIN2 or SEPTIN4 in the order 12-7-6-2-2-6-7-12 or 12-7-6-4-4-6-7-12 and located in the sperm annulus. Interacts with SOCS7. Interacts with HNRNPA1. As to quaternary structure, (Microbial infection) Interacts with HCV NS5B. In terms of tissue distribution, widely expressed.

The protein localises to the cytoplasm. The protein resides in the cytoskeleton. It localises to the spindle. It is found in the chromosome. Its subcellular location is the centromere. The protein localises to the kinetochore. The protein resides in the cleavage furrow. It localises to the midbody. It is found in the cell projection. Its subcellular location is the cilium. The protein localises to the flagellum. Functionally, filament-forming cytoskeletal GTPase. Required for normal organization of the actin cytoskeleton. Involved in cytokinesis. May play a role in HCV RNA replication. Forms a filamentous structure with SEPTIN12, SEPTIN6, SEPTIN2 and probably SEPTIN4 at the sperm annulus which is required for the structural integrity and motility of the sperm tail during postmeiotic differentiation. This chain is Septin-6, found in Homo sapiens (Human).